Here is a 201-residue protein sequence, read N- to C-terminus: Orotate phosphoribosyltransferase (201 aa).

Residue 113–121 participates in 5-phospho-alpha-D-ribose 1-diphosphate binding; it reads EDIITTGKS. Positions 117 and 145 each coordinate orotate.

The protein belongs to the purine/pyrimidine phosphoribosyltransferase family. PyrE subfamily. Homodimer. Requires Mg(2+) as cofactor.

The enzyme catalyses orotidine 5'-phosphate + diphosphate = orotate + 5-phospho-alpha-D-ribose 1-diphosphate. It participates in pyrimidine metabolism; UMP biosynthesis via de novo pathway; UMP from orotate: step 1/2. Functionally, catalyzes the transfer of a ribosyl phosphate group from 5-phosphoribose 1-diphosphate to orotate, leading to the formation of orotidine monophosphate (OMP). The polypeptide is Orotate phosphoribosyltransferase (Helicobacter pylori (strain ATCC 700392 / 26695) (Campylobacter pylori)).